The chain runs to 413 residues: Type II methyltransferase M.NaeI (413 aa).

One can recognise an SAM-dependent MTase C5-type domain in the interval 4 to 317 (LEVVEICAGA…KRIRAALNME (314 aa)). The active site involves cysteine 78.

Belongs to the class I-like SAM-binding methyltransferase superfamily. C5-methyltransferase family.

The enzyme catalyses a 2'-deoxycytidine in DNA + S-adenosyl-L-methionine = a 5-methyl-2'-deoxycytidine in DNA + S-adenosyl-L-homocysteine + H(+). Its function is as follows. A methylase that recognizes the double-stranded sequence 5'-GCCGGC-3', methylates C-? on both strands, and protects the DNA from cleavage by the NaeI endonuclease. The chain is Type II methyltransferase M.NaeI from Lentzea aerocolonigenes (Lechevalieria aerocolonigenes).